The chain runs to 275 residues: Nitrate import permease protein NrtB (275 aa).

A run of 7 helical transmembrane segments spans residues 25–45 (VIRP…LCSG), 89–109 (VAVG…LIGS), 120–140 (IFQV…LAAL), 147–167 (AIFV…TVGA), 189–209 (FFNI…RIGI), 213–233 (WLAI…FFIW), and 238–258 (SSLI…GLLL). Residues 82–262 (IFASLTRVAV…IVGLLLDRFI (181 aa)) form the ABC transmembrane type-1 domain.

This sequence belongs to the binding-protein-dependent transport system permease family. CysTW subfamily. The complex is composed of two ATP-binding proteins (NrtC and NrtD), two transmembrane proteins (NrtB) and a solute-binding protein (NrtA).

Its subcellular location is the cell inner membrane. Part of the ABC transporter complex NrtABCD involved in nitrate uptake. The complex is probably also involved in nitrite transport. Probably responsible for the translocation of the substrate across the membrane. In Synechocystis sp. (strain ATCC 27184 / PCC 6803 / Kazusa), this protein is Nitrate import permease protein NrtB (nrtB).